The sequence spans 366 residues: S-adenosylmethionine:tRNA ribosyltransferase-isomerase (366 aa).

It belongs to the QueA family. Monomer.

The protein resides in the cytoplasm. It carries out the reaction 7-aminomethyl-7-carbaguanosine(34) in tRNA + S-adenosyl-L-methionine = epoxyqueuosine(34) in tRNA + adenine + L-methionine + 2 H(+). The protein operates within tRNA modification; tRNA-queuosine biosynthesis. In terms of biological role, transfers and isomerizes the ribose moiety from AdoMet to the 7-aminomethyl group of 7-deazaguanine (preQ1-tRNA) to give epoxyqueuosine (oQ-tRNA). The polypeptide is S-adenosylmethionine:tRNA ribosyltransferase-isomerase (Caulobacter vibrioides (strain ATCC 19089 / CIP 103742 / CB 15) (Caulobacter crescentus)).